The sequence spans 62 residues: Large ribosomal subunit protein bL28 (62 aa).

Belongs to the bacterial ribosomal protein bL28 family.

The chain is Large ribosomal subunit protein bL28 from Thermobifida fusca (strain YX).